Reading from the N-terminus, the 503-residue chain is ATP synthase subunit alpha (503 aa).

170–177 (GDKQTGKT) is a binding site for ATP.

Belongs to the ATPase alpha/beta chains family. F-type ATPases have 2 components, CF(1) - the catalytic core - and CF(0) - the membrane proton channel. CF(1) has five subunits: alpha(3), beta(3), gamma(1), delta(1), epsilon(1). CF(0) has three main subunits: a(1), b(2) and c(9-12). The alpha and beta chains form an alternating ring which encloses part of the gamma chain. CF(1) is attached to CF(0) by a central stalk formed by the gamma and epsilon chains, while a peripheral stalk is formed by the delta and b chains.

The protein resides in the cell inner membrane. The enzyme catalyses ATP + H2O + 4 H(+)(in) = ADP + phosphate + 5 H(+)(out). Produces ATP from ADP in the presence of a proton gradient across the membrane. The alpha chain is a regulatory subunit. This chain is ATP synthase subunit alpha, found in Helicobacter pylori (strain HPAG1).